A 122-amino-acid chain; its full sequence is Small ribosomal subunit protein uS13 (122 aa).

Positions 93–122 are disordered; it reads RRGLPVRGQKTKTNARTRKGPKKTIANKKK.

This sequence belongs to the universal ribosomal protein uS13 family. In terms of assembly, part of the 30S ribosomal subunit. Forms a loose heterodimer with protein S19. Forms two bridges to the 50S subunit in the 70S ribosome.

In terms of biological role, located at the top of the head of the 30S subunit, it contacts several helices of the 16S rRNA. In the 70S ribosome it contacts the 23S rRNA (bridge B1a) and protein L5 of the 50S subunit (bridge B1b), connecting the 2 subunits; these bridges are implicated in subunit movement. Contacts the tRNAs in the A and P-sites. In Clostridium beijerinckii (strain ATCC 51743 / NCIMB 8052) (Clostridium acetobutylicum), this protein is Small ribosomal subunit protein uS13.